A 73-amino-acid polypeptide reads, in one-letter code: Large ribosomal subunit protein bL31 (73 aa).

Residues Cys16, Cys18, Cys38, and Cys41 each contribute to the Zn(2+) site.

The protein belongs to the bacterial ribosomal protein bL31 family. Type A subfamily. Part of the 50S ribosomal subunit. Requires Zn(2+) as cofactor.

Functionally, binds the 23S rRNA. This chain is Large ribosomal subunit protein bL31, found in Streptomyces avermitilis (strain ATCC 31267 / DSM 46492 / JCM 5070 / NBRC 14893 / NCIMB 12804 / NRRL 8165 / MA-4680).